A 343-amino-acid polypeptide reads, in one-letter code: Anthranilate phosphoribosyltransferase (343 aa).

5-phospho-alpha-D-ribose 1-diphosphate contacts are provided by residues Gly-84, 87 to 88 (GD), Thr-92, 94 to 97 (NIST), 112 to 120 (KHGNRSVSS), and Ser-124. An anthranilate-binding site is contributed by Gly-84. A Mg(2+)-binding site is contributed by Ser-96. An anthranilate-binding site is contributed by Asn-115. Arg-170 provides a ligand contact to anthranilate. Positions 229 and 230 each coordinate Mg(2+).

Belongs to the anthranilate phosphoribosyltransferase family. As to quaternary structure, homodimer. It depends on Mg(2+) as a cofactor.

The enzyme catalyses N-(5-phospho-beta-D-ribosyl)anthranilate + diphosphate = 5-phospho-alpha-D-ribose 1-diphosphate + anthranilate. It functions in the pathway amino-acid biosynthesis; L-tryptophan biosynthesis; L-tryptophan from chorismate: step 2/5. Its function is as follows. Catalyzes the transfer of the phosphoribosyl group of 5-phosphorylribose-1-pyrophosphate (PRPP) to anthranilate to yield N-(5'-phosphoribosyl)-anthranilate (PRA). This is Anthranilate phosphoribosyltransferase from Stenotrophomonas maltophilia (strain R551-3).